A 932-amino-acid polypeptide reads, in one-letter code: Glycine dehydrogenase (decarboxylating) (932 aa).

K685 is modified (N6-(pyridoxal phosphate)lysine).

This sequence belongs to the GcvP family. As to quaternary structure, the glycine cleavage system is composed of four proteins: P, T, L and H. The cofactor is pyridoxal 5'-phosphate.

It catalyses the reaction N(6)-[(R)-lipoyl]-L-lysyl-[glycine-cleavage complex H protein] + glycine + H(+) = N(6)-[(R)-S(8)-aminomethyldihydrolipoyl]-L-lysyl-[glycine-cleavage complex H protein] + CO2. Its function is as follows. The glycine cleavage system catalyzes the degradation of glycine. The P protein binds the alpha-amino group of glycine through its pyridoxal phosphate cofactor; CO(2) is released and the remaining methylamine moiety is then transferred to the lipoamide cofactor of the H protein. In Brucella suis biovar 1 (strain 1330), this protein is Glycine dehydrogenase (decarboxylating).